We begin with the raw amino-acid sequence, 364 residues long: UDP-N-acetylglucosamine--N-acetylmuramyl-(pentapeptide) pyrophosphoryl-undecaprenol N-acetylglucosamine transferase (364 aa).

UDP-N-acetyl-alpha-D-glucosamine is bound by residues 12-14 (TGG), Asn-124, Arg-167, Ser-195, Ile-249, 268-273 (ALTVSE), and Gln-294.

This sequence belongs to the glycosyltransferase 28 family. MurG subfamily.

It is found in the cell inner membrane. The enzyme catalyses di-trans,octa-cis-undecaprenyl diphospho-N-acetyl-alpha-D-muramoyl-L-alanyl-D-glutamyl-meso-2,6-diaminopimeloyl-D-alanyl-D-alanine + UDP-N-acetyl-alpha-D-glucosamine = di-trans,octa-cis-undecaprenyl diphospho-[N-acetyl-alpha-D-glucosaminyl-(1-&gt;4)]-N-acetyl-alpha-D-muramoyl-L-alanyl-D-glutamyl-meso-2,6-diaminopimeloyl-D-alanyl-D-alanine + UDP + H(+). It participates in cell wall biogenesis; peptidoglycan biosynthesis. In terms of biological role, cell wall formation. Catalyzes the transfer of a GlcNAc subunit on undecaprenyl-pyrophosphoryl-MurNAc-pentapeptide (lipid intermediate I) to form undecaprenyl-pyrophosphoryl-MurNAc-(pentapeptide)GlcNAc (lipid intermediate II). This Alteromonas mediterranea (strain DSM 17117 / CIP 110805 / LMG 28347 / Deep ecotype) protein is UDP-N-acetylglucosamine--N-acetylmuramyl-(pentapeptide) pyrophosphoryl-undecaprenol N-acetylglucosamine transferase.